The chain runs to 250 residues: Eukaryotic translation initiation factor 3 subunit K (250 aa).

In terms of domain architecture, PCI spans 54-235 (YDLFGNLAIL…DVKAGVVKEN (182 aa)).

The protein belongs to the eIF-3 subunit K family. Component of the eukaryotic translation initiation factor 3 (eIF-3) complex.

It is found in the cytoplasm. In terms of biological role, component of the eukaryotic translation initiation factor 3 (eIF-3) complex, which is involved in protein synthesis of a specialized repertoire of mRNAs and, together with other initiation factors, stimulates binding of mRNA and methionyl-tRNAi to the 40S ribosome. The eIF-3 complex specifically targets and initiates translation of a subset of mRNAs involved in cell proliferation. This chain is Eukaryotic translation initiation factor 3 subunit K, found in Cryptococcus neoformans var. neoformans serotype D (strain B-3501A) (Filobasidiella neoformans).